A 138-amino-acid polypeptide reads, in one-letter code: UPF0047 protein YjbQ (138 aa).

This sequence belongs to the UPF0047 family.

The sequence is that of UPF0047 protein YjbQ (yjbQ) from Escherichia coli O157:H7.